We begin with the raw amino-acid sequence, 174 residues long: Dual-action ribosomal maturation protein DarP (174 aa).

It belongs to the DarP family.

It localises to the cytoplasm. Its function is as follows. Member of a network of 50S ribosomal subunit biogenesis factors which assembles along the 30S-50S interface, preventing incorrect 23S rRNA structures from forming. Promotes peptidyl transferase center (PTC) maturation. The sequence is that of Dual-action ribosomal maturation protein DarP from Vibrio atlanticus (strain LGP32) (Vibrio splendidus (strain Mel32)).